The following is a 244-amino-acid chain: PF03932 family protein CutC (244 aa).

The protein belongs to the CutC family.

Its subcellular location is the cytoplasm. This is PF03932 family protein CutC from Pasteurella multocida (strain Pm70).